Consider the following 435-residue polypeptide: Ribulose bisphosphate carboxylase large chain (435 aa).

Lysine 5 carries the post-translational modification N6,N6,N6-trimethyllysine. Substrate-binding residues include asparagine 114 and threonine 164. Lysine 166 (proton acceptor) is an active-site residue. Position 168 (lysine 168) interacts with substrate. Mg(2+)-binding residues include lysine 192, aspartate 194, and glutamate 195. The residue at position 192 (lysine 192) is an N6-carboxylysine. Histidine 285 (proton acceptor) is an active-site residue. Residues arginine 286, histidine 318, and serine 370 each coordinate substrate.

This sequence belongs to the RuBisCO large chain family. Type I subfamily. Heterohexadecamer of 8 large chains and 8 small chains; disulfide-linked. The disulfide link is formed within the large subunit homodimers. Mg(2+) is required as a cofactor. In terms of processing, the disulfide bond which can form in the large chain dimeric partners within the hexadecamer appears to be associated with oxidative stress and protein turnover.

It is found in the plastid. Its subcellular location is the chloroplast. It carries out the reaction 2 (2R)-3-phosphoglycerate + 2 H(+) = D-ribulose 1,5-bisphosphate + CO2 + H2O. It catalyses the reaction D-ribulose 1,5-bisphosphate + O2 = 2-phosphoglycolate + (2R)-3-phosphoglycerate + 2 H(+). Functionally, ruBisCO catalyzes two reactions: the carboxylation of D-ribulose 1,5-bisphosphate, the primary event in carbon dioxide fixation, as well as the oxidative fragmentation of the pentose substrate in the photorespiration process. Both reactions occur simultaneously and in competition at the same active site. The protein is Ribulose bisphosphate carboxylase large chain of Drosera burmannii (Burmese sundew).